We begin with the raw amino-acid sequence, 306 residues long: Small ribosomal subunit biogenesis GTPase RsgA (306 aa).

In terms of domain architecture, CP-type G spans 77-236 (KNELKRPNVA…IVDTPGFSKL (160 aa)). GTP contacts are provided by residues 126-129 (SKID) and 179-187 (GQTGVGKST). Residues C260, C266, H268, and C274 each coordinate Zn(2+).

Belongs to the TRAFAC class YlqF/YawG GTPase family. RsgA subfamily. Monomer. Associates with 30S ribosomal subunit, binds 16S rRNA. Zn(2+) is required as a cofactor.

The protein localises to the cytoplasm. In terms of biological role, one of several proteins that assist in the late maturation steps of the functional core of the 30S ribosomal subunit. Helps release RbfA from mature subunits. May play a role in the assembly of ribosomal proteins into the subunit. Circularly permuted GTPase that catalyzes slow GTP hydrolysis, GTPase activity is stimulated by the 30S ribosomal subunit. The protein is Small ribosomal subunit biogenesis GTPase RsgA of Onion yellows phytoplasma (strain OY-M).